A 511-amino-acid chain; its full sequence is 60 kDa neurofilament protein (511 aa).

The tract at residues 1 to 32 is disordered; the sequence is MSVTQKKTEISTTTTYEGESRPSSGMSGFSYS. Residues 1–99 are head; that stretch reads MSVTQKKTEI…KANREREKQD (99 aa). Polar residues predominate over residues 21 to 30; the sequence is RPSSGMSGFS. The IF rod domain occupies 96-449; the sequence is EKQDMRDLNE…KLLEGEESRV (354 aa). Positions 100 to 135 are coil 1A; sequence MRDLNERFANYIEKVRFLEAQNKKLAGELEELKSKW. Positions 136–145 are linker 1; that stretch reads GKETSAIKEM. A coil 1B region spans residues 146–284; that stretch reads YETELEEARK…VHAQELKELA (139 aa). Residues 285–303 form a linker 12 region; it reads ALAYRDTTAENREFWRNEL. Residues 304-449 form a coil 2 region; that stretch reads AQAIRDIQQE…KLLEGEESRV (146 aa). The tail stretch occupies residues 450-511; the sequence is GMKQIVEQVV…EEKKSMGSSD (62 aa). A disordered region spans residues 479–511; sequence GYEATGGITTTTTTSSQERRSMSEEKKSMGSSD. Residues 483-492 show a composition bias toward low complexity; that stretch reads TGGITTTTTT. Residues 495–511 are compositionally biased toward basic and acidic residues; it reads QERRSMSEEKKSMGSSD.

This sequence belongs to the intermediate filament family.

In terms of biological role, major squid neurofilament protein. This is 60 kDa neurofilament protein from Doryteuthis pealeii (Longfin inshore squid).